The following is a 325-amino-acid chain: MKVFDYEDVQLIPNKCIVNSRSECDTTVILGKHAFKMPIVPANMQTIINESIAEFLAENGYFYIMHRFNGSARIPFVKKMKERQLISSISVGVKKEECLFVEELAKQGLTPDYITIDIAHGHSNSVIEMIQRIKTRLPETFVIAGNVGTPEAVRELENAGADATKVGIGPGKVCITKIKTGFGTGGWQLAALRWCAKAARKPIIADGGIRTHGDIAKSIRFGATMVMIGSLFAGHEESSGETKIENGIAYKEYFGSASEFQKGEKKNIEGKKIWIQHKGSLKNTLIEMHQDLQSSISYAGGRDLEAIRKVDYVIVKNSIFNGDTI.

Cys174 serves as the catalytic Thioimidate intermediate. NADP(+) is bound at residue 203–226; the sequence is IIADGGIRTHGDIAKSIRFGATMV.

This sequence belongs to the IMPDH/GMPR family. GuaC type 2 subfamily.

It catalyses the reaction IMP + NH4(+) + NADP(+) = GMP + NADPH + 2 H(+). Catalyzes the irreversible NADPH-dependent deamination of GMP to IMP. It functions in the conversion of nucleobase, nucleoside and nucleotide derivatives of G to A nucleotides, and in maintaining the intracellular balance of A and G nucleotides. The polypeptide is GMP reductase (Helicobacter pylori (strain J99 / ATCC 700824) (Campylobacter pylori J99)).